The chain runs to 182 residues: Large ribosomal subunit protein uL22 (182 aa).

A disordered region spans residues 155-182 (SGVDGAKQGKKKKKTDGVEKATTKRQKQ).

The protein belongs to the universal ribosomal protein uL22 family.

The sequence is that of Large ribosomal subunit protein uL22 (RpL17) from Carabus granulatus (Ground beetle).